The chain runs to 385 residues: Multidrug resistance protein MdtE (385 aa).

The N-terminal stretch at Met1–Ala20 is a signal peptide. A lipid anchor (N-palmitoyl cysteine) is attached at Cys21. Cys21 is lipidated: S-diacylglycerol cysteine.

The protein belongs to the membrane fusion protein (MFP) (TC 8.A.1) family. Homotrimer. Part of the tripartite efflux system MdtEF-TolC, which is composed of an inner membrane transporter, MdtF, a membrane fusion protein, MdtE, and an outer membrane component, TolC. The complex forms a large protein conduit and can translocate molecules across both the inner and outer membranes.

The protein resides in the cell inner membrane. Part of the tripartite efflux system MdtEF-TolC, which confers resistance to various compounds. In Escherichia coli O157:H7, this protein is Multidrug resistance protein MdtE (mdtE).